Reading from the N-terminus, the 557-residue chain is Membrane protein insertase YidC (557 aa).

Transmembrane regions (helical) follow at residues 3-23, 363-383, 437-457, 476-496, and 507-527; these read IKRTVLWVIFFMSAVMLFDNW, FVGNWGWAIVLLTLLIKAVFF, LPVVIQIPVFISLYWVLLASV, PYFILPVLMAVSMFVQTKLNP, and MMFMPIAFSVMFFFFPAGLVL.

This sequence belongs to the OXA1/ALB3/YidC family. Type 1 subfamily. Interacts with the Sec translocase complex via SecD. Specifically interacts with transmembrane segments of nascent integral membrane proteins during membrane integration.

Its subcellular location is the cell inner membrane. In terms of biological role, required for the insertion and/or proper folding and/or complex formation of integral membrane proteins into the membrane. Involved in integration of membrane proteins that insert both dependently and independently of the Sec translocase complex, as well as at least some lipoproteins. Aids folding of multispanning membrane proteins. The polypeptide is Membrane protein insertase YidC (Burkholderia thailandensis (strain ATCC 700388 / DSM 13276 / CCUG 48851 / CIP 106301 / E264)).